Here is a 453-residue protein sequence, read N- to C-terminus: NADH-quinone oxidoreductase subunit D (453 aa).

Over residues 1 to 21 (MKDTETRPGRHRAPEPAHPEQ) the composition is skewed to basic and acidic residues. Residues 1-30 (MKDTETRPGRHRAPEPAHPEQPDTTGDTVV) are disordered.

Belongs to the complex I 49 kDa subunit family. In terms of assembly, NDH-1 is composed of 14 different subunits. Subunits NuoB, C, D, E, F, and G constitute the peripheral sector of the complex.

The protein resides in the cell membrane. The catalysed reaction is a quinone + NADH + 5 H(+)(in) = a quinol + NAD(+) + 4 H(+)(out). In terms of biological role, NDH-1 shuttles electrons from NADH, via FMN and iron-sulfur (Fe-S) centers, to quinones in the respiratory chain. The immediate electron acceptor for the enzyme in this species is believed to be a menaquinone. Couples the redox reaction to proton translocation (for every two electrons transferred, four hydrogen ions are translocated across the cytoplasmic membrane), and thus conserves the redox energy in a proton gradient. The polypeptide is NADH-quinone oxidoreductase subunit D (Nocardia farcinica (strain IFM 10152)).